The chain runs to 304 residues: Nucleotide-binding protein ROP_69550 (304 aa).

24-31 is an ATP binding site; sequence GLSGAGLQ. 75–78 lines the GTP pocket; that stretch reads DVRS.

Belongs to the RapZ-like family.

In terms of biological role, displays ATPase and GTPase activities. This is Nucleotide-binding protein ROP_69550 from Rhodococcus opacus (strain B4).